The chain runs to 1444 residues: DNA polymerase III PolC-type (1444 aa).

Residues 196–218 (EAVQVMQKRQAEGQNGNSSAAPL) are disordered. Residues 207–216 (EGQNGNSSAA) are compositionally biased toward polar residues. An Exonuclease domain is found at 428-584 (YCVFDVETTG…FDAEATAYLA (157 aa)).

The protein belongs to the DNA polymerase type-C family. PolC subfamily.

The protein resides in the cytoplasm. It catalyses the reaction DNA(n) + a 2'-deoxyribonucleoside 5'-triphosphate = DNA(n+1) + diphosphate. Functionally, required for replicative DNA synthesis. This DNA polymerase also exhibits 3' to 5' exonuclease activity. The protein is DNA polymerase III PolC-type of Listeria welshimeri serovar 6b (strain ATCC 35897 / DSM 20650 / CCUG 15529 / CIP 8149 / NCTC 11857 / SLCC 5334 / V8).